The primary structure comprises 409 residues: Nucleoprotein (409 aa).

Disordered regions lie at residues 1-32, 44-63, 120-145, and 164-193; these read MASGKTTGKTDAPAPVIKLGGPKPPKVGSSGN, LNSPPPKFEGSGVPDNENLK, GADTKSRSNQGTRDPDKFDQYPLRFS, and RSGRSTAASSAASSRAPSRDGSRGRRSGAE. The segment covering 15-31 has biased composition (low complexity); that stretch reads PVIKLGGPKPPKVGSSG. The RNA-binding stretch occupies residues 29 to 160; the sequence is SSGNASWFQA…GNFRWDFIPI (132 aa). The CoV N NTD domain maps to 31–156; the sequence is GNASWFQALK…GGPDGNFRWD (126 aa). Low complexity predominate over residues 164-179; that stretch reads RSGRSTAASSAASSRA. Residues 180-192 show a composition bias toward basic and acidic residues; it reads PSRDGSRGRRSGA. Ser-190 carries the phosphoserine; by host modification. A CoV N CTD domain is found at 215 to 331; the sequence is TKAKADEMAH…QCVDGVGTRP (117 aa). Residues 226 to 333 form a dimerization region; that stretch reads RYCKRTIPPG…VDGVGTRPKD (108 aa). Cys-320 and Cys-323 are oxidised to a cystine. The interval 326–409 is disordered; that stretch reads GVGTRPKDDE…GDSALGENEL (84 aa). Residues 341 to 355 are compositionally biased toward polar residues; that stretch reads RPNSRPATRTSSPAP. Over residues 358-367 the composition is skewed to basic residues; that stretch reads QRQKKEKKSK. A compositionally biased stretch (basic and acidic residues) spans 368–384; the sequence is KQDDEVDKALTSDEERN. Thr-378 is modified (phosphothreonine; by host). Ser-379 carries the post-translational modification Phosphoserine; by host.

The protein belongs to the gammacoronavirus nucleocapsid protein family. In terms of assembly, homooligomer. Both monomeric and oligomeric forms interact with RNA. Interacts with protein M. Interacts with NSP3; this interaction serves to tether the genome to the newly translated replicase-transcriptase complex at a very early stage of infection. Post-translationally, ADP-ribosylated. The ADP-ribosylation is retained in the virion during infection. Phosphorylated on serine and threonine residues.

Its subcellular location is the virion. It localises to the host endoplasmic reticulum-Golgi intermediate compartment. It is found in the host Golgi apparatus. Functionally, packages the positive strand viral genome RNA into a helical ribonucleocapsid (RNP) and plays a fundamental role during virion assembly through its interactions with the viral genome and membrane protein M. Plays an important role in enhancing the efficiency of subgenomic viral RNA transcription as well as viral replication. This chain is Nucleoprotein, found in Avian infectious bronchitis virus (strain H120) (IBV).